A 367-amino-acid polypeptide reads, in one-letter code: uncharacterized protein (367 aa).

Residues 6 to 26 (IAAGVVVALAAVWCTSAWFTG) form a helical membrane-spanning segment.

To E.coli YdgA and YihF.

The protein resides in the membrane. This is an uncharacterized protein from Haemophilus influenzae (strain ATCC 51907 / DSM 11121 / KW20 / Rd).